The following is a 618-amino-acid chain: MNQGHDMYYQQHMSAGPTQQPPTVTSYNPQPPIMQPSHGSYPAPPQPYGGYPYTNGMPSPQGPPVPGQMGPGSVLPSIAGHHGQAPGPVANQYSGFDTSGQIAPPGMKPRVTATLWEDEGSLCFQVEARGVCVARREDNHMINGTKLLNVAGMTRGRRDGILKSEKMRHVVKIGPMHLKGVWIPFERALDFANKEKITELLYPLFVHNISALLYHPANQNRNNQLMAAAERRKAETGGMRNPQGPPGLPALHHHSMSQNGSQSLSGNIGRPSLDRAHTFPTPPTSASSAVNMGSSDSFTWPPHQAMSNGQQNPMSIDTSLSNTRSMPTTPATTPPGSTLQSMQAYPPASQSYDGSRQLYNAPQLQQSPYQPTSTSPQDRSLYNQATYVKSEMGPPSARPMGSVLPGDHQNDQKPVNGLMHPPQGADQGHNNGVEDEADHEHDPEYTHDSRTYDNSQSQYNYTAPPVSSISSEQAHVSTDMPPGGQHGNSGRSTPRSAAAPQAYYQQAYSTSPRSATHQSTSNLYNVMSNDRGSTTNGSANGDVYSQSTDLSNGYATPVTNGNANLKRGRDDDDDRSSSSGQMDLKRRKTLMDNPISSPVYETMNRPAAAIAHPVSRRR.

A compositionally biased stretch (polar residues) spans Met-13–Asn-28. Residues Met-13–Pro-105 form a disordered region. Low complexity predominate over residues Tyr-48 to Ser-59. A compositionally biased stretch (polar residues) spans Asn-91–Gln-101. One can recognise an HTH APSES-type domain in the interval Arg-110 to Pro-216. Residues Gly-144 to Glu-165 constitute a DNA-binding region (H-T-H motif). Disordered regions lie at residues Ala-229–Ser-355 and Ser-390–Arg-618. Polar residues-rich tracts occupy residues Met-256–Gly-266, Thr-284–Phe-298, Ala-305–Met-326, and Gly-336–Ser-355. The span at Asp-438 to Thr-451 shows a compositional bias: basic and acidic residues. The span at Tyr-452–Val-476 shows a compositional bias: polar residues. Residues Pro-494–Pro-512 show a composition bias toward low complexity. The span at Arg-513–Ala-563 shows a compositional bias: polar residues. The interval Lys-566–Lys-588 is nuclear localization domain.

The protein belongs to the EFG1/PHD1/stuA family.

It localises to the nucleus. Its function is as follows. Transcription factor that regulates asexual reproduction. Binds the StuA-response elements (StRE) with the consensus sequence 5'-(A/T)CGCG(T/A)N(A/C)-3' at the promoters of target genes. Required for appressorium-mediated infection of rice leaves due to its involvement in the mobilization of lipids and glycogen. The sequence is that of Cell pattern formation-associated protein STU1 from Pyricularia oryzae (strain 70-15 / ATCC MYA-4617 / FGSC 8958) (Rice blast fungus).